We begin with the raw amino-acid sequence, 441 residues long: GTPase Der (441 aa).

EngA-type G domains follow at residues 2–164 (QKVA…PADE) and 173–343 (IRIS…EKWQ). Residues 8-15 (GRPNVGKS), 55-59 (DTGGL), 116-119 (NKID), 179-186 (GRPNVGKS), 226-230 (DTAGI), and 288-291 (NKWD) each bind GTP. The 85-residue stretch at 344–428 (SRIPTAELNR…PVRLKWKEKG (85 aa)) folds into the KH-like domain.

The protein belongs to the TRAFAC class TrmE-Era-EngA-EngB-Septin-like GTPase superfamily. EngA (Der) GTPase family. As to quaternary structure, associates with the 50S ribosomal subunit.

Its function is as follows. GTPase that plays an essential role in the late steps of ribosome biogenesis. This Deinococcus geothermalis (strain DSM 11300 / CIP 105573 / AG-3a) protein is GTPase Der.